Reading from the N-terminus, the 338-residue chain is Tetraacyldisaccharide 4'-kinase (338 aa).

53 to 60 (VAGGAGKT) contributes to the ATP binding site.

Belongs to the LpxK family.

The catalysed reaction is a lipid A disaccharide + ATP = a lipid IVA + ADP + H(+). The protein operates within glycolipid biosynthesis; lipid IV(A) biosynthesis; lipid IV(A) from (3R)-3-hydroxytetradecanoyl-[acyl-carrier-protein] and UDP-N-acetyl-alpha-D-glucosamine: step 6/6. Transfers the gamma-phosphate of ATP to the 4'-position of a tetraacyldisaccharide 1-phosphate intermediate (termed DS-1-P) to form tetraacyldisaccharide 1,4'-bis-phosphate (lipid IVA). The polypeptide is Tetraacyldisaccharide 4'-kinase (Polaromonas sp. (strain JS666 / ATCC BAA-500)).